The following is a 372-amino-acid chain: Peptidyl-prolyl cis-trans isomerase D (372 aa).

The region spanning 9–175 (FFDISIGGKP…KEVKIEDCGV (167 aa)) is the PPIase cyclophilin-type domain. 3 TPR repeats span residues 220–253 (VEAV…LKQY), 271–304 (VSLF…DNTD), and 309–342 (AKAL…QPHD).

Belongs to the cyclophilin-type PPIase family. PPIase D subfamily.

The protein localises to the cytoplasm. The enzyme catalyses [protein]-peptidylproline (omega=180) = [protein]-peptidylproline (omega=0). Its function is as follows. PPIases accelerate the folding of proteins. It catalyzes the cis-trans isomerization of proline imidic peptide bonds in oligopeptides. In Kluyveromyces lactis (strain ATCC 8585 / CBS 2359 / DSM 70799 / NBRC 1267 / NRRL Y-1140 / WM37) (Yeast), this protein is Peptidyl-prolyl cis-trans isomerase D (CPR6).